Reading from the N-terminus, the 165-residue chain is V-type proton ATPase 16 kDa proteolipid subunit (165 aa).

At 1 to 10 the chain is on the lumenal side; sequence MPSTFSGDET. The helical transmembrane segment at 11–33 threads the bilayer; the sequence is APFFGFLGAAAALVFSCMGAAYG. Residues 34-55 lie on the Cytoplasmic side of the membrane; that stretch reads TAKSGVGVASMGVMRPELVMKS. A helical membrane pass occupies residues 56–76; sequence IVPVVMAGVLGIYGLIIAVII. Residues 77–95 are Lumenal-facing; it reads STGINPKTKSYYLFDGYAH. The helical transmembrane segment at 96–117 threads the bilayer; sequence LSSGLACGLAGLSAGMAIGIVG. Over 118 to 129 the chain is Cytoplasmic; the sequence is DAGVRANAQQPK. The chain crosses the membrane as a helical span at residues 130-155; that stretch reads LFVGMILILIFAEALALYGLIVGIIL. Residues 156–165 are Lumenal-facing; sequence SSRAGQSRAE.

The protein belongs to the V-ATPase proteolipid subunit family. V-ATPase is a heteromultimeric enzyme composed of a peripheral catalytic V1 complex (main components: subunits A, B, C, D, E, and F) attached to an integral membrane V0 proton pore complex (main component: the proteolipid protein; which is present as a hexamer that forms the proton-conducting pore).

The protein resides in the vacuole membrane. Proton-conducting pore forming subunit of the membrane integral V0 complex of vacuolar ATPase. V-ATPase is responsible for acidifying a variety of intracellular compartments in eukaryotic cells. The sequence is that of V-type proton ATPase 16 kDa proteolipid subunit from Nicotiana tabacum (Common tobacco).